A 365-amino-acid chain; its full sequence is Aspartate-semialdehyde dehydrogenase (365 aa).

NADP(+) is bound by residues Thr-12, Gly-13, Ser-14, Val-15, Ser-37, Ser-40, Leu-85, and Asp-86. Cys-156 (acyl-thioester intermediate) is an active-site residue. Residue Gly-188 participates in NADP(+) binding. His-256 functions as the Proton acceptor in the catalytic mechanism. Residue Asn-343 participates in NADP(+) binding.

Belongs to the aspartate-semialdehyde dehydrogenase family. Homotetramer; dimer of dimers.

Its subcellular location is the cytoplasm. It is found in the cytosol. It localises to the nucleus. The catalysed reaction is L-aspartate 4-semialdehyde + phosphate + NADP(+) = 4-phospho-L-aspartate + NADPH + H(+). It participates in amino-acid biosynthesis; L-methionine biosynthesis via de novo pathway; L-homoserine from L-aspartate: step 2/3. Its pathway is amino-acid biosynthesis; L-threonine biosynthesis; L-threonine from L-aspartate: step 2/5. Its activity is regulated as follows. Inhibited by the non-competitive inhibitors phthalaldehyde and naphthalene, the competitive inhibitor 1,4-benzoquinone and derivates such as 2-chloro-3-methoxy-1,4-naphthoquinone, 2,3-dichloro-1,4-naphthoquinone, 2-chloro-1,4-naphthoquinone, 2-bromo-1,4-naphthoquinone and 2,3-dichloro-5,8-dihydroxy-1,4-naphthoquinone, and 5-aminoisoquinoline. Inhibited by vinyl sulfones. Functionally, catalyzes the NADPH-dependent formation of L-aspartate 4-semialdehyde (L-ASA) by the reductive dephosphorylation of 4-phospho-L-aspartate. Mediates the second step in the biosynthesis of amino acids that derive from aspartate (the aspartate family of amino acids), including methioinine and threonine, the latter of which is a precursor to isoleucine. The chain is Aspartate-semialdehyde dehydrogenase from Candida albicans (strain SC5314 / ATCC MYA-2876) (Yeast).